A 491-amino-acid chain; its full sequence is Ketol-acid reductoisomerase (NADP(+)) (491 aa).

Residues 14-208 (LDQLGRCRFM…GGHRAGVLES (195 aa)) enclose the KARI N-terminal Rossmann domain. Residues 45–48 (CGAQ), arginine 68, arginine 76, serine 78, and 108–110 (DKQ) each bind NADP(+). Histidine 132 is an active-site residue. NADP(+) is bound at residue glycine 158. KARI C-terminal knotted domains follow at residues 209 to 344 (SFVA…NAPK) and 345 to 485 (YEGK…MTDM). Aspartate 217, glutamate 221, glutamate 389, and glutamate 393 together coordinate Mg(2+). Serine 414 contacts substrate.

This sequence belongs to the ketol-acid reductoisomerase family. The cofactor is Mg(2+).

The catalysed reaction is (2R)-2,3-dihydroxy-3-methylbutanoate + NADP(+) = (2S)-2-acetolactate + NADPH + H(+). It carries out the reaction (2R,3R)-2,3-dihydroxy-3-methylpentanoate + NADP(+) = (S)-2-ethyl-2-hydroxy-3-oxobutanoate + NADPH + H(+). It functions in the pathway amino-acid biosynthesis; L-isoleucine biosynthesis; L-isoleucine from 2-oxobutanoate: step 2/4. Its pathway is amino-acid biosynthesis; L-valine biosynthesis; L-valine from pyruvate: step 2/4. In terms of biological role, involved in the biosynthesis of branched-chain amino acids (BCAA). Catalyzes an alkyl-migration followed by a ketol-acid reduction of (S)-2-acetolactate (S2AL) to yield (R)-2,3-dihydroxy-isovalerate. In the isomerase reaction, S2AL is rearranged via a Mg-dependent methyl migration to produce 3-hydroxy-3-methyl-2-ketobutyrate (HMKB). In the reductase reaction, this 2-ketoacid undergoes a metal-dependent reduction by NADPH to yield (R)-2,3-dihydroxy-isovalerate. The chain is Ketol-acid reductoisomerase (NADP(+)) from Pasteurella multocida (strain Pm70).